The primary structure comprises 600 residues: Aspartate--tRNA(Asp/Asn) ligase (600 aa).

Residue Glu187 participates in L-aspartate binding. Positions 211 to 214 (QIFK) are aspartate. Positions 233 and 463 each coordinate L-aspartate. 233 to 235 (RDE) lines the ATP pocket. Residue Glu497 participates in ATP binding. An L-aspartate-binding site is contributed by Arg504. An ATP-binding site is contributed by 549 to 552 (GVDR).

It belongs to the class-II aminoacyl-tRNA synthetase family. Type 1 subfamily. As to quaternary structure, homodimer.

It localises to the cytoplasm. It carries out the reaction tRNA(Asx) + L-aspartate + ATP = L-aspartyl-tRNA(Asx) + AMP + diphosphate. Aspartyl-tRNA synthetase with relaxed tRNA specificity since it is able to aspartylate not only its cognate tRNA(Asp) but also tRNA(Asn). Reaction proceeds in two steps: L-aspartate is first activated by ATP to form Asp-AMP and then transferred to the acceptor end of tRNA(Asp/Asn). The chain is Aspartate--tRNA(Asp/Asn) ligase from Wolbachia sp. subsp. Drosophila simulans (strain wRi).